Consider the following 98-residue polypeptide: NADH-ubiquinone oxidoreductase chain 4L (98 aa).

3 helical membrane-spanning segments follow: residues 1 to 21 (MTTMFFNLLLAFMVALMGVYI), 29 to 49 (TLLCLEGMMLSIFIMVSLTLL), and 59 to 79 (FPLILLVFSACEAGVGLALLV).

The protein belongs to the complex I subunit 4L family. In terms of assembly, core subunit of respiratory chain NADH dehydrogenase (Complex I) which is composed of 45 different subunits.

It localises to the mitochondrion inner membrane. The enzyme catalyses a ubiquinone + NADH + 5 H(+)(in) = a ubiquinol + NAD(+) + 4 H(+)(out). Functionally, core subunit of the mitochondrial membrane respiratory chain NADH dehydrogenase (Complex I) which catalyzes electron transfer from NADH through the respiratory chain, using ubiquinone as an electron acceptor. Part of the enzyme membrane arm which is embedded in the lipid bilayer and involved in proton translocation. The chain is NADH-ubiquinone oxidoreductase chain 4L (MT-ND4L) from Zaglossus bruijni (Western long-beaked echidna).